A 228-amino-acid polypeptide reads, in one-letter code: ATP-dependent dethiobiotin synthetase BioD 1 (228 aa).

13–18 contributes to the ATP binding site; it reads EVGKTV. T17 contributes to the Mg(2+) binding site. The active site involves K38. Residue S42 coordinates substrate. ATP contacts are provided by residues D55, 116–119, 176–177, and 205–207; these read EGAG, ND, and PWL. D55 and E116 together coordinate Mg(2+).

The protein belongs to the dethiobiotin synthetase family. Homodimer. It depends on Mg(2+) as a cofactor.

The protein resides in the cytoplasm. The enzyme catalyses (7R,8S)-7,8-diammoniononanoate + CO2 + ATP = (4R,5S)-dethiobiotin + ADP + phosphate + 3 H(+). The protein operates within cofactor biosynthesis; biotin biosynthesis; biotin from 7,8-diaminononanoate: step 1/2. Its function is as follows. Catalyzes a mechanistically unusual reaction, the ATP-dependent insertion of CO2 between the N7 and N8 nitrogen atoms of 7,8-diaminopelargonic acid (DAPA, also called 7,8-diammoniononanoate) to form a ureido ring. This Salmonella typhi protein is ATP-dependent dethiobiotin synthetase BioD 1.